Here is an 81-residue protein sequence, read N- to C-terminus: MASNSMSSSASWTRKENKLFERALATYDQDTPDRWHNVARAVGGKSAEEVRRHYELLIRDVNDIESGRYPHPNYRSNGNNH.

Residues 7–62 (SSSASWTRKENKLFERALATYDQDTPDRWHNVARAVGGKSAEEVRRHYELLIRDVN) enclose the SANT domain.

In terms of tissue distribution, expressed just outside the vascular bundles in the rosette stem and the leaf traces. Not detected in floral primordia.

It localises to the nucleus. Its function is as follows. Probable transcription factor. The chain is Protein RADIALIS-like 3 (RL3) from Arabidopsis thaliana (Mouse-ear cress).